We begin with the raw amino-acid sequence, 148 residues long: Auxin-responsive protein SAUR65 (148 aa).

It belongs to the ARG7 family.

The protein resides in the cell membrane. Its function is as follows. May promote auxin-stimulated organ elongation, such as hypocotyls, stamen filaments and petals. The protein is Auxin-responsive protein SAUR65 of Arabidopsis thaliana (Mouse-ear cress).